Reading from the N-terminus, the 471-residue chain is Metal tolerance protein C1 (471 aa).

Over 1–78 (MGIIRFQILN…PGEEGEKIFR (78 aa)) the chain is Cytoplasmic. The chain crosses the membrane as a helical span at residues 79 to 99 (LGLTADIGLSVAKALTGYLCG). At 100 to 101 (ST) the chain is on the vacuolar side. The chain crosses the membrane as a helical span at residues 102 to 122 (AIIADAAHSVSDVVLSGVALV). Topologically, residues 123–144 (SYRAANVPKDKEHPYGHGKFET) are cytoplasmic. Residues 145 to 165 (LGALGISAMLLATGSGIAWHA) form a helical membrane-spanning segment. The Vacuolar segment spans residues 166–192 (LDLLSIALSAAPEVIHSGHHHGIDMNH). A helical membrane pass occupies residues 193 to 213 (PILALTVTIASISIKEGLYWI). The Cytoplasmic portion of the chain corresponds to 214 to 236 (TKRAGEKQGSGLMMANAWHHRSD). The helical transmembrane segment at 237-257 (AISSLVALVGVGGSILGVNFL) threads the bilayer. Topologically, residues 258–423 (DPLAGLVVST…RITPHLLHSK (166 aa)) are vacuolar. Residues 424–444 (ILLQIVVAMPSTMSIQDVMIA) form a helical membrane-spanning segment. The Cytoplasmic segment spans residues 445–471 (AEHAEKEILKAAPNVARVSIQLSLNSE).

Belongs to the cation diffusion facilitator (CDF) transporter (TC 2.A.4) family.

Its subcellular location is the vacuole membrane. Involved in sequestration of excess metal in the cytoplasm into vacuoles to maintain metal homeostasis. The chain is Metal tolerance protein C1 (MTPC1) from Arabidopsis thaliana (Mouse-ear cress).